A 472-amino-acid chain; its full sequence is MERKTVLVIADLGGCPPHMFYESAAEKYNLVSFIPRPFAITASHAALIEKYSIAVIKDKDYFKSLADFEHPDSIYWAHEDHDKPEEEVVEEIVKVADMFAVDAITTNNELFIAPMAKACKRLGLRGAGVQAAENARDKNKMRAAFNRAGVKSIKNKRVTTLEDFRAALQEIGTPLILKPTYLASSIGVTLIKEMETAEAEFNRVNEYLKSINVPKAVTFEAPFIAEEFLQGEYDDWYETSGYSDYISIEGIMADGEYFPVAIHDKTPQIGFTETAHITPSILDDDAKRKIVEAAKKANEGLGLENCATHTEIKLMKNREAGLIESAPRFAGWNMIPNIKKVFGVDMAQLLLDVLCFGKEADLPKGLLEQEPCYVADCHLYPQHFKENGQLPETVVDFVIESIEIPDGVLKGDTELVSFSAAEAGTSVDLRLFEAFNSIAAFELKGSNSNDVAESIKQIQQQAKLTAKYALSV.

Glu-109 lines the Mg(2+) pocket. Residues Lys-138 and Lys-178 each coordinate ATP. Positions 142 to 355 (RAAFNRAGVK…MAQLLLDVLC (214 aa)) constitute an ATP-grasp domain. Leu-182 serves as a coordination point for Mg(2+). Residues 184–185 (SS), 226–229 (EEFL), and Gln-268 each bind ATP. Substrate contacts are provided by residues Glu-273 and 309–311 (HTE). Mg(2+) is bound by residues Glu-311 and Glu-324. 328–331 (RFAG) provides a ligand contact to substrate.

In terms of assembly, monomer or homodimer. The cofactor is Mg(2+).

The enzyme catalyses L-anticapsin + L-alanine + ATP = bacilysin + ADP + phosphate + H(+). It participates in antibiotic biosynthesis; bacilysin biosynthesis. In terms of biological role, part of the bacABCDEFG operon responsible for the biosynthesis of bacilysin, an irreversible inactivator of the glutaminase domain of glucosamine synthetase. Catalyzes the formation of alpha-dipeptides from various L-amino acids in the presence of ATP. In vivo catalyzes the ligation of L-alanine and L-anticapsin (epoxycyclohexanonyl-Ala) to produce the final bacilysin antibiotic (L-Ala-L-4S-cyclohexenonyl-Ala dipeptide). This is Alanine--anticapsin ligase from Bacillus amyloliquefaciens (Bacillus velezensis).